The chain runs to 396 residues: Succinyl-CoA:mesaconate CoA-transferase (396 aa).

Catalysis depends on aspartate 175, which acts as the Nucleophile.

It belongs to the CoA-transferase III family. As to quaternary structure, homodimer.

It catalyses the reaction mesaconate + succinyl-CoA = 2-methylfumaryl-CoA + succinate. Its activity is regulated as follows. Shows highest activity at 4 M KCl. Does not require divalent ions for activity. Functionally, involved in the methylaspartate cycle. Catalyzes the transfer of the CoA moiety from succinyl-CoA to mesaconate to generate mesaconyl-CoA (2-methylfumaryl-CoA) and succinate. Also shows high activity with methylsuccinate as CoA-acceptor, and only low activity with glutarate, acrylate and itaconate. Cannot use other CoA donors like acetyl-CoA, propionyl-CoA, butyryl-CoA or acetoacetyl-CoA. This Haloarcula hispanica (strain ATCC 33960 / DSM 4426 / JCM 8911 / NBRC 102182 / NCIMB 2187 / VKM B-1755) protein is Succinyl-CoA:mesaconate CoA-transferase.